The primary structure comprises 556 residues: Formate--tetrahydrofolate ligase (556 aa).

Residue 65–72 participates in ATP binding; it reads TPAGEGKS.

This sequence belongs to the formate--tetrahydrofolate ligase family.

It catalyses the reaction (6S)-5,6,7,8-tetrahydrofolate + formate + ATP = (6R)-10-formyltetrahydrofolate + ADP + phosphate. It participates in one-carbon metabolism; tetrahydrofolate interconversion. This Clostridium perfringens (strain ATCC 13124 / DSM 756 / JCM 1290 / NCIMB 6125 / NCTC 8237 / Type A) protein is Formate--tetrahydrofolate ligase.